Consider the following 434-residue polypeptide: GTPase Der (434 aa).

EngA-type G domains are found at residues 3 to 167 and 175 to 350; these read NIVA…PEIE and PRFA…ESRS. GTP contacts are provided by residues 9–16, 56–60, 119–122, 181–188, 228–232, and 293–296; these read GRPNVGKS, DTGGY, NKVD, GRPNAGKS, DTAGI, and NKWD. One can recognise a KH-like domain in the interval 351–434; that stretch reads KKIKTRQFND…VPISIFFRKK (84 aa).

The protein belongs to the TRAFAC class TrmE-Era-EngA-EngB-Septin-like GTPase superfamily. EngA (Der) GTPase family. As to quaternary structure, associates with the 50S ribosomal subunit.

In terms of biological role, GTPase that plays an essential role in the late steps of ribosome biogenesis. This chain is GTPase Der, found in Christiangramia forsetii (strain DSM 17595 / CGMCC 1.15422 / KT0803) (Gramella forsetii).